A 294-amino-acid chain; its full sequence is RAB7A-interacting MON1-CCZ1 complex subunit 1 (294 aa).

The residue at position 2 (Ala-2) is an N-acetylalanine.

This sequence belongs to the RIMOC1 family. In terms of assembly, interacts with the MON1A-CCZ1B complex. Interacts with GDP-bound RAB7A and promotes its interaction with the MON1A-CCZ1B complex.

Its subcellular location is the cytoplasm. The protein resides in the cytosol. In terms of biological role, plays an important role in the removal of damaged mitochondria via mitophagy by controlling the stability and localization of RAB7A. Required for the recruitment of RAB7A and ATG9A vesicles to damaged mitochondria and promotes the stability of RAB7A by inhibiting its proteasomal degradation during mitophagy. In Homo sapiens (Human), this protein is RAB7A-interacting MON1-CCZ1 complex subunit 1.